Reading from the N-terminus, the 475-residue chain is Ribulose bisphosphate carboxylase large chain (475 aa).

A propeptide spanning residues 1-2 (MS) is cleaved from the precursor. Position 3 is an N-acetylproline (Pro3). N6,N6,N6-trimethyllysine is present on Lys14. Residues Asn123 and Thr173 each contribute to the substrate site. Lys175 functions as the Proton acceptor in the catalytic mechanism. Position 177 (Lys177) interacts with substrate. 3 residues coordinate Mg(2+): Lys201, Asp203, and Glu204. Lys201 is modified (N6-carboxylysine). His294 serves as the catalytic Proton acceptor. Residues Arg295, His327, and Ser379 each contribute to the substrate site.

Belongs to the RuBisCO large chain family. Type I subfamily. Heterohexadecamer of 8 large chains and 8 small chains; disulfide-linked. The disulfide link is formed within the large subunit homodimers. Mg(2+) is required as a cofactor. Post-translationally, the disulfide bond which can form in the large chain dimeric partners within the hexadecamer appears to be associated with oxidative stress and protein turnover.

The protein localises to the plastid. It localises to the chloroplast. It carries out the reaction 2 (2R)-3-phosphoglycerate + 2 H(+) = D-ribulose 1,5-bisphosphate + CO2 + H2O. The enzyme catalyses D-ribulose 1,5-bisphosphate + O2 = 2-phosphoglycolate + (2R)-3-phosphoglycerate + 2 H(+). RuBisCO catalyzes two reactions: the carboxylation of D-ribulose 1,5-bisphosphate, the primary event in carbon dioxide fixation, as well as the oxidative fragmentation of the pentose substrate in the photorespiration process. Both reactions occur simultaneously and in competition at the same active site. This chain is Ribulose bisphosphate carboxylase large chain, found in Vitis vinifera (Grape).